We begin with the raw amino-acid sequence, 498 residues long: WD repeat-containing protein 55 homolog (498 aa).

Residues 1–133 (MHTHNNFKTP…TFDLDEDDET (133 aa)) are disordered. 3 stretches are compositionally biased toward acidic residues: residues 12-23 (DEDELDDLDEDM), 31-48 (IEQE…EYDL), and 83-95 (SDSD…DAGD). The span at 114-123 (PSGSNRQSEA) shows a compositional bias: polar residues. WD repeat units follow at residues 155–194 (KLED…NKLL), 199–238 (VHSK…LKKL), 242–280 (AHDD…AIFE), 283–322 (ELED…MYVQ), 325–364 (PYEE…YHCD), and 409–448 (QHNM…DFGD).

The protein belongs to the WD repeat WDR55 family.

This is WD repeat-containing protein 55 homolog from Drosophila erecta (Fruit fly).